A 414-amino-acid polypeptide reads, in one-letter code: Serine/threonine transporter SstT (414 aa).

The next 8 membrane-spanning stretches (helical) occupy residues 16-36 (GSLV…AWIS), 46-66 (LGTL…LMLV), 84-104 (ILFL…VFSF), 143-163 (ALLN…GFAL), 180-200 (AVTF…FGLV), 219-239 (LVVL…LLVF), 300-320 (MAGA…TLGV), and 332-352 (VVAS…LLLI).

It belongs to the dicarboxylate/amino acid:cation symporter (DAACS) (TC 2.A.23) family.

Its subcellular location is the cell inner membrane. The enzyme catalyses L-serine(in) + Na(+)(in) = L-serine(out) + Na(+)(out). It catalyses the reaction L-threonine(in) + Na(+)(in) = L-threonine(out) + Na(+)(out). Its function is as follows. Involved in the import of serine and threonine into the cell, with the concomitant import of sodium (symport system). The chain is Serine/threonine transporter SstT from Salmonella dublin (strain CT_02021853).